Here is a 507-residue protein sequence, read N- to C-terminus: MRINPGEIVKVLESKIEGFKEEINLEDVGKVIQVGDGIARAYGLNNVMANEMVEFVETGTIGVAFNLEEDNVGIIILGDYKGIKEGHTVRRLKKIMQVPVGEALLGRVVNPLGEPVDGLGPIEAKEFRDVEVKAPGVIYRKPVDTPLQTGIKIIDALIPIGRGQRELIIGDRQTGKTAIAIDTIINQKGKGVYCVYVAIGQKASAVARLVSKLKEAGAMEYTTVVVASAADNAALQYIAPYAGCAMGEYFLYNGKDALVIYDDLSKHAVAYRQLSLLLRRPPGREAYPGDVFYLHSRLLERAARLDEKYGGGSLTALPIIETQANDISAYIPTNVISITDGQIYLEPSLFYAGQRPAVNIGLSVSRVGGAAQIKAMKKVAGSLKLDLAQYQELETFAQFATELDPATQAQITRGQRLMELMKQEQYAPMEVEEQVAVLYAGINGYLDDLEVEKVRLFEKKLIEFLKDKKSEILNKIREEKDLSEETEKMLKEAIEEFKSEFVKVYGK.

Position 170-177 (170-177 (GDRQTGKT)) interacts with ATP.

Belongs to the ATPase alpha/beta chains family. In terms of assembly, F-type ATPases have 2 components, CF(1) - the catalytic core - and CF(0) - the membrane proton channel. CF(1) has five subunits: alpha(3), beta(3), gamma(1), delta(1), epsilon(1). CF(0) has three main subunits: a(1), b(2) and c(9-12). The alpha and beta chains form an alternating ring which encloses part of the gamma chain. CF(1) is attached to CF(0) by a central stalk formed by the gamma and epsilon chains, while a peripheral stalk is formed by the delta and b chains.

The protein resides in the cell inner membrane. The enzyme catalyses ATP + H2O + 4 H(+)(in) = ADP + phosphate + 5 H(+)(out). Functionally, produces ATP from ADP in the presence of a proton gradient across the membrane. The alpha chain is a regulatory subunit. This chain is ATP synthase subunit alpha, found in Thermosipho africanus (strain TCF52B).